The sequence spans 385 residues: Glycerol-3-phosphate dehydrogenase [NAD(+)] 1 (385 aa).

Residues 29 to 34 (GSGNWG), phenylalanine 121, lysine 144, and alanine 177 contribute to the NAD(+) site. Position 144 (lysine 144) interacts with substrate. Lysine 232 (proton acceptor) is an active-site residue. 2 residues coordinate NAD(+): arginine 296 and glutamine 325. 296–297 (RN) contacts substrate. The residue at position 376 (serine 376) is a Phosphoserine. The residue at position 382 (threonine 382) is a Phosphothreonine.

It belongs to the NAD-dependent glycerol-3-phosphate dehydrogenase family.

The protein resides in the cytoplasm. The catalysed reaction is sn-glycerol 3-phosphate + NAD(+) = dihydroxyacetone phosphate + NADH + H(+). This is Glycerol-3-phosphate dehydrogenase [NAD(+)] 1 (gpd1) from Schizosaccharomyces pombe (strain 972 / ATCC 24843) (Fission yeast).